Here is a 679-residue protein sequence, read N- to C-terminus: Dihydroxyacetone phosphate acyltransferase (679 aa).

Ser-11 bears the Phosphoserine mark. The HXXXXD motif motif lies at 161–166 (HRSYID). Lys-642 bears the N6-acetyllysine mark.

The protein belongs to the GPAT/DAPAT family. As to quaternary structure, part of a heterotrimeric complex composed of GNPAT, AGPS and a modified form of GNPAT.

The protein resides in the peroxisome membrane. The catalysed reaction is dihydroxyacetone phosphate + an acyl-CoA = a 1-acylglycerone 3-phosphate + CoA. The enzyme catalyses dihydroxyacetone phosphate + hexadecanoyl-CoA = 1-hexadecanoylglycerone 3-phosphate + CoA. Its pathway is membrane lipid metabolism; glycerophospholipid metabolism. In terms of biological role, dihydroxyacetonephosphate acyltransferase catalyzing the first step in the biosynthesis of plasmalogens, a subset of phospholipids that differ from other glycerolipids by having an alkyl chain attached through a vinyl ether linkage at the sn-1 position of the glycerol backbone, and which unique physical properties have an impact on various aspects of cell signaling and membrane biology. This Oryctolagus cuniculus (Rabbit) protein is Dihydroxyacetone phosphate acyltransferase.